Consider the following 261-residue polypeptide: Pimeloyl-[acyl-carrier protein] methyl ester esterase (261 aa).

In terms of domain architecture, AB hydrolase-1 spans 15–243; it reads HLVLLHGWGL…AAHAPFISHP (229 aa). Residues tryptophan 22, 83-84, and 144-148 contribute to the substrate site; these read SL and FLALQ. Serine 83 functions as the Nucleophile in the catalytic mechanism. Catalysis depends on residues aspartate 208 and histidine 236. Substrate is bound at residue histidine 236.

This sequence belongs to the AB hydrolase superfamily. Carboxylesterase BioH family. As to quaternary structure, monomer.

The protein localises to the cytoplasm. It catalyses the reaction 6-carboxyhexanoyl-[ACP] methyl ester + H2O = 6-carboxyhexanoyl-[ACP] + methanol + H(+). The protein operates within cofactor biosynthesis; biotin biosynthesis. The physiological role of BioH is to remove the methyl group introduced by BioC when the pimeloyl moiety is complete. It allows to synthesize pimeloyl-ACP via the fatty acid synthetic pathway through the hydrolysis of the ester bonds of pimeloyl-ACP esters. The sequence is that of Pimeloyl-[acyl-carrier protein] methyl ester esterase from Proteus mirabilis (strain HI4320).